Consider the following 277-residue polypeptide: Nickel import ATP-binding protein NikE (277 aa).

Residues 14 to 253 (YRTVSLVGRS…EHPASRALQR (240 aa)) form the ABC transporter domain. 46–53 (GRSGSGKS) is a binding site for ATP.

It belongs to the ABC transporter superfamily. Nickel importer (TC 3.A.1.5.3) family. As to quaternary structure, the complex is composed of two ATP-binding proteins (NikD and NikE), two transmembrane proteins (NikB and NikC) and a solute-binding protein (NikA).

The protein localises to the cell inner membrane. It carries out the reaction Ni(2+)(out) + ATP + H2O = Ni(2+)(in) + ADP + phosphate + H(+). Its function is as follows. Part of the ABC transporter complex NikABCDE involved in nickel import. Responsible for energy coupling to the transport system. The sequence is that of Nickel import ATP-binding protein NikE from Rhodospirillum rubrum (strain ATCC 11170 / ATH 1.1.1 / DSM 467 / LMG 4362 / NCIMB 8255 / S1).